The sequence spans 2505 residues: Fatty acid synthase (2505 aa).

Position 1 is an N-acetylmethionine (Met-1). The Ketosynthase family 3 (KS3) domain maps to 1–406 (MEEVVIAGMS…GANVHVILQP (406 aa)). Position 59 is an N6-acetyllysine (Lys-59). Ser-63 carries the phosphoserine modification. Residue Lys-70 is modified to N6-acetyllysine. Residue Cys-161 is the For beta-ketoacyl synthase activity of the active site. Ser-207 bears the Phosphoserine mark. The For beta-ketoacyl synthase activity role is filled by His-293. Lys-298 bears the N6-acetyllysine mark. His-331 acts as the For beta-ketoacyl synthase activity in catalysis. An acyl and malonyl transferases region spans residues 429–817 (RTMEAVQGLL…IDINPNALFP (389 aa)). At Lys-528 the chain carries N6-acetyllysine. The active-site For malonyltransferase activity is the Ser-581. An acyl-CoA is bound by residues 647 to 648 (DT) and Phe-671. At Lys-673 the chain carries N6-acetyllysine. Ser-725 carries the post-translational modification Phosphoserine. Arg-773 serves as a coordination point for an acyl-CoA. N6-acetyllysine is present on Lys-790. The tract at residues 844–966 (IPVAEDFPNG…KVYQWEDPDS (123 aa)) is N-terminal hotdog fold. One can recognise a PKS/mFAS DH domain in the interval 844–1112 (IPVAEDFPNG…TSRRQQEQLV (269 aa)). The Proton acceptor; for dehydratase activity role is filled by His-878. Residues 983–1112 (VSRLTQGEVY…TSRRQQEQLV (130 aa)) are C-terminal hotdog fold. At Lys-993 the chain carries N6-acetyllysine. Asp-1032 serves as the catalytic Proton donor; for dehydratase activity. Position 1276 is an N6-acetyllysine (Lys-1276). Cys-1464 is modified (S-nitrosocysteine). A phosphoserine mark is found at Ser-1578 and Ser-1588. An enoyl reductase region spans residues 1629–1857 (DVPSSWTLEE…VQVREEEPEA (229 aa)). 1665–1682 (VLIHSGSGGVGQAAISIA) contacts NADP(+). Lys-1698 bears the N6-(pyridoxal phosphate)lysine; alternate mark. N6-acetyllysine; alternate is present on Lys-1698. Residues Lys-1765, Lys-1841, and Lys-1989 each carry the N6-acetyllysine modification. 1765-1780 (KFDLSNNHPLGMAIFL) serves as a coordination point for NADP(+). Residues 1858-2113 (MLPGAQPTLI…VLAEKKAVAH (256 aa)) form a beta-ketoacyl reductase region. Cys-2085 is modified (S-nitrosocysteine). In terms of domain architecture, Carrier spans 2113 to 2193 (HGDGEAQRDL…EMSSKAGSDT (81 aa)). Ser-2151 is modified (O-(pantetheine 4'-phosphoryl)serine; alternate). At Ser-2151 the chain carries Phosphoserine; alternate. Phosphoserine is present on residues Ser-2191 and Ser-2230. A thioesterase region spans residues 2202–2505 (NDTSLKQAQL…AEPRVSVREG (304 aa)). The active-site For thioesterase activity is the Ser-2302. Lys-2385 is subject to N6-acetyllysine. Residue Lys-2443 forms a Glycyl lysine isopeptide (Lys-Gly) (interchain with G-Cter in SUMO2) linkage. The For thioesterase activity role is filled by His-2475.

In terms of assembly, homodimer which is arranged in a head to tail fashion. Interacts with CEACAM1; this interaction is insulin and phosphorylation-dependent; reduces fatty-acid synthase activity. In terms of processing, S-nitrosylation of Fatty acid synthase at cysteine residues Cys-1464 or Cys-2085 is important for the enzyme dimerization. In adipocytes, S-nitrosylation of Fatty acid synthase occurs under physiological conditions and gradually increases during adipogenesis.

It localises to the cytoplasm. Its subcellular location is the melanosome. It carries out the reaction acetyl-CoA + n malonyl-CoA + 2n NADPH + 2n H(+) = a long-chain fatty acid + (n+1) CoA + n CO2 + 2n NADP(+).. The enzyme catalyses holo-[ACP] + acetyl-CoA = acetyl-[ACP] + CoA. It catalyses the reaction holo-[ACP] + malonyl-CoA = malonyl-[ACP] + CoA. The catalysed reaction is a fatty acyl-[ACP] + malonyl-[ACP] + H(+) = a 3-oxoacyl-[ACP] + holo-[ACP] + CO2. It carries out the reaction a (3R)-hydroxyacyl-[ACP] + NADP(+) = a 3-oxoacyl-[ACP] + NADPH + H(+). The enzyme catalyses a (3R)-hydroxyacyl-[ACP] = a (2E)-enoyl-[ACP] + H2O. It catalyses the reaction a 2,3-saturated acyl-[ACP] + NADP(+) = a (2E)-enoyl-[ACP] + NADPH + H(+). The catalysed reaction is hexadecanoyl-[ACP] + H2O = hexadecanoate + holo-[ACP] + H(+). It carries out the reaction acetyl-[ACP] + malonyl-[ACP] + H(+) = 3-oxobutanoyl-[ACP] + holo-[ACP] + CO2. The enzyme catalyses 3-oxobutanoyl-[ACP] + NADPH + H(+) = (3R)-hydroxybutanoyl-[ACP] + NADP(+). It catalyses the reaction (3R)-hydroxybutanoyl-[ACP] = (2E)-butenoyl-[ACP] + H2O. The catalysed reaction is (2E)-butenoyl-[ACP] + NADPH + H(+) = butanoyl-[ACP] + NADP(+). It carries out the reaction butanoyl-[ACP] + malonyl-[ACP] + H(+) = 3-oxohexanoyl-[ACP] + holo-[ACP] + CO2. The enzyme catalyses 3-oxohexanoyl-[ACP] + NADPH + H(+) = (3R)-hydroxyhexanoyl-[ACP] + NADP(+). It catalyses the reaction (3R)-hydroxyhexanoyl-[ACP] = (2E)-hexenoyl-[ACP] + H2O. The catalysed reaction is (2E)-hexenoyl-[ACP] + NADPH + H(+) = hexanoyl-[ACP] + NADP(+). It carries out the reaction hexanoyl-[ACP] + malonyl-[ACP] + H(+) = 3-oxooctanoyl-[ACP] + holo-[ACP] + CO2. The enzyme catalyses 3-oxooctanoyl-[ACP] + NADPH + H(+) = (3R)-hydroxyoctanoyl-[ACP] + NADP(+). It catalyses the reaction (3R)-hydroxyoctanoyl-[ACP] = (2E)-octenoyl-[ACP] + H2O. The catalysed reaction is (2E)-octenoyl-[ACP] + NADPH + H(+) = octanoyl-[ACP] + NADP(+). It carries out the reaction octanoyl-[ACP] + malonyl-[ACP] + H(+) = 3-oxodecanoyl-[ACP] + holo-[ACP] + CO2. The enzyme catalyses 3-oxodecanoyl-[ACP] + NADPH + H(+) = (3R)-hydroxydecanoyl-[ACP] + NADP(+). It catalyses the reaction (3R)-hydroxydecanoyl-[ACP] = (2E)-decenoyl-[ACP] + H2O. The catalysed reaction is (2E)-decenoyl-[ACP] + NADPH + H(+) = decanoyl-[ACP] + NADP(+). It carries out the reaction decanoyl-[ACP] + malonyl-[ACP] + H(+) = 3-oxododecanoyl-[ACP] + holo-[ACP] + CO2. The enzyme catalyses 3-oxododecanoyl-[ACP] + NADPH + H(+) = (3R)-hydroxydodecanoyl-[ACP] + NADP(+). It catalyses the reaction (3R)-hydroxydodecanoyl-[ACP] = (2E)-dodecenoyl-[ACP] + H2O. The catalysed reaction is (2E)-dodecenoyl-[ACP] + NADPH + H(+) = dodecanoyl-[ACP] + NADP(+). It carries out the reaction dodecanoyl-[ACP] + malonyl-[ACP] + H(+) = 3-oxotetradecanoyl-[ACP] + holo-[ACP] + CO2. The enzyme catalyses 3-oxotetradecanoyl-[ACP] + NADPH + H(+) = (3R)-hydroxytetradecanoyl-[ACP] + NADP(+). It catalyses the reaction (3R)-hydroxytetradecanoyl-[ACP] = (2E)-tetradecenoyl-[ACP] + H2O. The catalysed reaction is (2E)-tetradecenoyl-[ACP] + NADPH + H(+) = tetradecanoyl-[ACP] + NADP(+). It carries out the reaction tetradecanoyl-[ACP] + malonyl-[ACP] + H(+) = 3-oxohexadecanoyl-[ACP] + holo-[ACP] + CO2. The enzyme catalyses 3-oxohexadecanoyl-[ACP] + NADPH + H(+) = (3R)-hydroxyhexadecanoyl-[ACP] + NADP(+). It catalyses the reaction (3R)-hydroxyhexadecanoyl-[ACP] = (2E)-hexadecenoyl-[ACP] + H2O. The catalysed reaction is (2E)-hexadecenoyl-[ACP] + NADPH + H(+) = hexadecanoyl-[ACP] + NADP(+). It carries out the reaction hexadecanoyl-[ACP] + malonyl-[ACP] + H(+) = 3-oxooctadecanoyl-[ACP] + holo-[ACP] + CO2. The enzyme catalyses 3-oxooctadecanoyl-[ACP] + NADPH + H(+) = (3R)-hydroxyoctadecanoyl-[ACP] + NADP(+). It catalyses the reaction (3R)-hydroxyoctadecanoyl-[ACP] = (2E)-octadecenoyl-[ACP] + H2O. The catalysed reaction is (2E)-octadecenoyl-[ACP] + NADPH + H(+) = octadecanoyl-[ACP] + NADP(+). It carries out the reaction tetradecanoyl-[ACP] + H2O = tetradecanoate + holo-[ACP] + H(+). The enzyme catalyses octadecanoyl-[ACP] + H2O = octadecanoate + holo-[ACP] + H(+). The protein operates within lipid metabolism; fatty acid biosynthesis. With respect to regulation, cerulenin, a potent non-competitive pharmacological inhibitor of FAS, binds covalently to the active site of the condensing enzyme region, inactivating a key enzyme step in fatty acid synthesis. Another inhibitor, though less efficient, is C75, a member of the alpha-methylene-gamma-butyrolactone chemical class, also proposed as an antitumour and anti-obesity agent. In terms of biological role, fatty acid synthetase is a multifunctional enzyme that catalyzes the de novo biosynthesis of long-chain saturated fatty acids starting from acetyl-CoA and malonyl-CoA in the presence of NADPH. This multifunctional protein contains 7 catalytic activities and a site for the binding of the prosthetic group 4'-phosphopantetheine of the acyl carrier protein ([ACP]) domain. The chain is Fatty acid synthase (Fasn) from Rattus norvegicus (Rat).